The chain runs to 295 residues: Glutamyl-Q tRNA(Asp) synthetase (295 aa).

L-glutamate-binding positions include 5 to 9 (RFAPS) and glutamate 41. The 'HIGH' region signature appears at 8–18 (PSPTGLLHIGS). Residues cysteine 97, cysteine 99, tyrosine 117, and cysteine 121 each contribute to the Zn(2+) site. Positions 178 and 196 each coordinate L-glutamate. Positions 234-238 (KWSKQ) match the 'KMSKS' region motif. Lysine 237 serves as a coordination point for ATP.

The protein belongs to the class-I aminoacyl-tRNA synthetase family. GluQ subfamily. Requires Zn(2+) as cofactor.

Its function is as follows. Catalyzes the tRNA-independent activation of glutamate in presence of ATP and the subsequent transfer of glutamate onto a tRNA(Asp). Glutamate is transferred on the 2-amino-5-(4,5-dihydroxy-2-cyclopenten-1-yl) moiety of the queuosine in the wobble position of the QUC anticodon. In Neisseria meningitidis serogroup C (strain 053442), this protein is Glutamyl-Q tRNA(Asp) synthetase.